Here is a 266-residue protein sequence, read N- to C-terminus: uncharacterized protein (266 aa).

The 150-residue stretch at 112 to 261 (LEKKIFISHS…KKWERIKAKF (150 aa)) folds into the TIR domain. Residue glutamate 192 is part of the active site.

The enzyme catalyses NAD(+) + H2O = ADP-D-ribose + nicotinamide + H(+). This is an uncharacterized protein from Bacillus subtilis (strain 168).